The primary structure comprises 291 residues: MSNTEFHPHIGVGLRLPHHDHFHHHRPALSWLEIHSENYFQPNSFHRQQLNQMAEHYQISCHGIGLSLGSVTGVNPQHLLRLKQLVDDLQPFLVSDHLSWSENGGHYFNDLLPLPYTEEALEVFCRNVLHVQDALKRPILIENPSSYLKYQHSTISEWQFLTEVQRRTDCRLLLDLNNVYVSAFNHGFDCQTYLEAIPAACVDEIHLAGFTIKSLEQGEIWIDTHSQPVSAEVWQLYQQWIAQHGSRHTLIEWDLDLPPVDVLLNEAKKAETLLRASLLHNNPMHPSLALG.

Belongs to the UPF0276 family.

The protein is UPF0276 protein VV3194 of Vibrio vulnificus (strain YJ016).